The sequence spans 64 residues: Conotoxin Pu3.5 (64 aa).

The first 16 residues, 1–16 (LGVLLTICLLLFPLTA), serve as a signal peptide directing secretion. A propeptide spanning residues 17–49 (VPLDGDQPADQPAGRMQDDISSEQHPFFDPVKR) is cleaved from the precursor. Intrachain disulfides connect cysteine 50-cysteine 63, cysteine 51-cysteine 58, and cysteine 54-cysteine 62.

This sequence belongs to the conotoxin M superfamily. Expressed by the venom duct.

It is found in the secreted. The sequence is that of Conotoxin Pu3.5 from Conus pulicarius (Flea-bitten cone).